The following is an 886-amino-acid chain: Leucine-rich repeat-containing protein sog2 (886 aa).

LRR repeat units lie at residues 28–49, 53–74, 76–97, 99–120, 122–143, and 145–166; these read NALT…QLER, RIAR…ILKF, RLRY…LCRL, SLEI…FGAL, NLKV…IAHM, and NLEI…IANN. 4 disordered regions span residues 236–288, 301–364, 394–431, and 455–483; these read SPGM…THPP, SPRQ…ASPI, PTQL…STRL, and RIFA…TNDS. Residues 243–277 show a composition bias toward polar residues; it reads VTPSPHSHSPAGHQQSTPKSTLSKTNENSEGTLYD. S301 is modified (phosphoserine). 3 stretches are compositionally biased toward polar residues: residues 312-347, 394-406, and 419-431; these read SLAT…SSVA, PTQL…TSAI, and SNST…STRL. S464 is subject to Phosphoserine.

The protein resides in the cytoplasm. It localises to the nucleus. The polypeptide is Leucine-rich repeat-containing protein sog2 (Schizosaccharomyces pombe (strain 972 / ATCC 24843) (Fission yeast)).